The chain runs to 385 residues: Phosphotransferase FrzJ (385 aa).

Positions 38 and 59 each coordinate ATP. Asp245 is a catalytic residue.

This sequence belongs to the methylthioribose kinase family. Monomer.

The enzyme catalyses (1S,3S,6S,7S,8S,9S)-6-[(4-methoxyphenyl)methyl]-3-(methylamino)-5-azatricyclo[6.3.1.0(1,5)]dodecane-7,9-diol + ATP = (-)-FR901483 + ADP + 2 H(+). It participates in secondary metabolite biosynthesis. Functionally, phosphotransferase; part of the gene cluster that mediates the biosynthesis of the alkaloid (-)-FR901483, a potent immunosuppressant that shows efficacy in animal models and a probable inhibitor of purine nucleotide biosynthesis by targeting phosphoribosylpyrophosphate amidotransferase (PPAT). FrzJ catalyzes the last step of the pathway by phosphorylating the C4'-OH of dephospho-(-)-FR901483 to produce (-)-FR901483. The biosynthesis of (-)-FR901483 starts with the condensation of two L-tyrosines to yield (S,S)-dityrosyl-piperazine. This process occurs in 3 steps with the non-canonical nonribosomal peptide synthetase FrzA catalyzing the reduction of L-tyrosine into L-tyrosinal, the spontaneous condensation of 2 L-tyrosinal units, and the subsequent reduction by the NmrA-like family domain-containing oxidoreductase FrzB. The cytochrome P450 monooxygenase FrzC then performs coupling between N10 and C1' to morph the piperazine into a 1,4-diazabicyclo[3.2.1]octane spiro-fused to a 2,5-cyclohexadienone. The dienone portion is further reduced to cyclohexanone by the flavin-dependent reductase FrzD. The methyltranserases (MTs) FrzE and FrzF are then involved in the methylation at the C10' amine and the C4 phenolic oxygen, respectively. The order of the two MTs appear to be interchangeable. Cleavage of the C9-N10' bond by the dioxygenase FrzG then leads to formation of a conjugated iminium. In addition to the oxidation of C9, an additional dehydrogenation between C7 and C8 can occur to give a likely shunt product. The next biosynthetic step is the intramolecular aldol condensation catalyzed by the newly identified aldolase FrzH to yield an aza-tricyclic product with the formation of a C9-C3' bond. The short-chain dehydrogenase/reductase FrzI then produces dephospho-(-)-FR901483 that is phosphorylated at C4'-OH into (-)-FR901483 by the phosphotransferase FrzJ. This is Phosphotransferase FrzJ from Cladobotryum sp.